The following is a 183-amino-acid chain: Ribosome-recycling factor (183 aa).

Belongs to the RRF family.

It is found in the cytoplasm. In terms of biological role, responsible for the release of ribosomes from messenger RNA at the termination of protein biosynthesis. May increase the efficiency of translation by recycling ribosomes from one round of translation to another. The protein is Ribosome-recycling factor of Mycoplasma mobile (strain ATCC 43663 / 163K / NCTC 11711) (Mesomycoplasma mobile).